We begin with the raw amino-acid sequence, 418 residues long: Deubiquitinase and deneddylase Dub1 (418 aa).

Positions M1–K10 are enriched in polar residues. Residues M1–V23 are disordered. Residues T40–F60 traverse the membrane as a helical segment. Positions S75–K145 are disordered. Residues E86–P141 show a composition bias toward pro residues. Residues H288, D305, and C358 contribute to the active site.

Belongs to the peptidase C48 family.

The protein localises to the secreted. It localises to the host cell. Its subcellular location is the membrane. In terms of biological role, effector proteins function to alter host cell physiology and promote bacterial survival in host tissues. This protease possesses deubiquitinating and deneddylating activities. This is Deubiquitinase and deneddylase Dub1 (cdu1) from Chlamydia trachomatis serovar A (strain ATCC VR-571B / DSM 19440 / HAR-13).